Here is a 321-residue protein sequence, read N- to C-terminus: Agamous-like MADS-box protein AGL80 (321 aa).

The MADS-box domain maps to Met-1–Asn-61. Residues Phe-89–Thr-114 adopt a coiled-coil conformation.

In terms of assembly, interacts with AGL61 and AGL62. Forms a heterodimer with AGL61. Interacts with MEE14/CBP1. In terms of tissue distribution, expressed in the central cell of the female gametophyte and in early endosperm. Also detected in ovaries, young siliques, roots, leaves, stems, young flowers and anthers.

The protein resides in the nucleus. Probable transcription factor. Controls central cell differentiation during female gametophyte development. Required for the expression of DEMETER and DD46, but not for the expression of FIS2. Probable transcription factor that may function in the maintenance of the proper function of the central cell in pollen tube attraction. This chain is Agamous-like MADS-box protein AGL80 (AGL80), found in Arabidopsis thaliana (Mouse-ear cress).